Here is a 421-residue protein sequence, read N- to C-terminus: Acetate kinase (421 aa).

Mg(2+) is bound at residue asparagine 7. Lysine 14 serves as a coordination point for ATP. Residue arginine 91 coordinates substrate. Aspartate 148 functions as the Proton donor/acceptor in the catalytic mechanism. Residues 208–212 (HIGNG) and 283–285 (DRR) each bind ATP. Glutamate 387 contributes to the Mg(2+) binding site.

The protein belongs to the acetokinase family. Homodimer. Mg(2+) is required as a cofactor. Requires Mn(2+) as cofactor.

Its subcellular location is the cytoplasm. The enzyme catalyses acetate + ATP = acetyl phosphate + ADP. The protein operates within metabolic intermediate biosynthesis; acetyl-CoA biosynthesis; acetyl-CoA from acetate: step 1/2. Its function is as follows. Catalyzes the formation of acetyl phosphate from acetate and ATP. Can also catalyze the reverse reaction. The chain is Acetate kinase from Geobacter sulfurreducens (strain ATCC 51573 / DSM 12127 / PCA).